A 620-amino-acid polypeptide reads, in one-letter code: Protein translocase subunit SecD (620 aa).

Transmembrane regions (helical) follow at residues 10-30 (YLLILAVLAVGFIYSAPNLYP), 464-484 (LWGMLFVSLFIIVIYRFFGVI), 488-507 (ALAFNMVMLVALMSILGATL), 511-533 (GIAGIVLTMGMAVDANVLIFSRI), 555-575 (FTAILDANLTSLLVGGILYAM), and 582-602 (GFAVTMSLGIITSMFTAIMVT).

This sequence belongs to the SecD/SecF family. SecD subfamily. In terms of assembly, forms a complex with SecF. Part of the essential Sec protein translocation apparatus which comprises SecA, SecYEG and auxiliary proteins SecDF-YajC and YidC.

Its subcellular location is the cell inner membrane. Its function is as follows. Part of the Sec protein translocase complex. Interacts with the SecYEG preprotein conducting channel. SecDF uses the proton motive force (PMF) to complete protein translocation after the ATP-dependent function of SecA. The polypeptide is Protein translocase subunit SecD (Pseudomonas aeruginosa (strain ATCC 15692 / DSM 22644 / CIP 104116 / JCM 14847 / LMG 12228 / 1C / PRS 101 / PAO1)).